Reading from the N-terminus, the 352-residue chain is Probable dual-specificity RNA methyltransferase RlmN (352 aa).

Glutamate 99 serves as the catalytic Proton acceptor. Residues 105 to 325 (EGDRATLCIS…ESHGYTCTIR (221 aa)) enclose the Radical SAM core domain. A disulfide bridge links cysteine 112 with cysteine 336. 3 residues coordinate [4Fe-4S] cluster: cysteine 119, cysteine 123, and cysteine 126. S-adenosyl-L-methionine-binding positions include 164–165 (GE), serine 196, 217–219 (SLH), and histidine 293. Cysteine 336 functions as the S-methylcysteine intermediate in the catalytic mechanism.

It belongs to the radical SAM superfamily. RlmN family. [4Fe-4S] cluster is required as a cofactor.

It is found in the cytoplasm. It carries out the reaction adenosine(2503) in 23S rRNA + 2 reduced [2Fe-2S]-[ferredoxin] + 2 S-adenosyl-L-methionine = 2-methyladenosine(2503) in 23S rRNA + 5'-deoxyadenosine + L-methionine + 2 oxidized [2Fe-2S]-[ferredoxin] + S-adenosyl-L-homocysteine. The catalysed reaction is adenosine(37) in tRNA + 2 reduced [2Fe-2S]-[ferredoxin] + 2 S-adenosyl-L-methionine = 2-methyladenosine(37) in tRNA + 5'-deoxyadenosine + L-methionine + 2 oxidized [2Fe-2S]-[ferredoxin] + S-adenosyl-L-homocysteine. In terms of biological role, specifically methylates position 2 of adenine 2503 in 23S rRNA and position 2 of adenine 37 in tRNAs. The protein is Probable dual-specificity RNA methyltransferase RlmN of Porphyromonas gingivalis (strain ATCC 33277 / DSM 20709 / CIP 103683 / JCM 12257 / NCTC 11834 / 2561).